The following is a 140-amino-acid chain: ATP synthase epsilon chain (140 aa).

It belongs to the ATPase epsilon chain family. In terms of assembly, F-type ATPases have 2 components, CF(1) - the catalytic core - and CF(0) - the membrane proton channel. CF(1) has five subunits: alpha(3), beta(3), gamma(1), delta(1), epsilon(1). CF(0) has three main subunits: a, b and c.

The protein resides in the cell inner membrane. In terms of biological role, produces ATP from ADP in the presence of a proton gradient across the membrane. This Saccharophagus degradans (strain 2-40 / ATCC 43961 / DSM 17024) protein is ATP synthase epsilon chain.